The primary structure comprises 3584 residues: D-lysergyl-peptide-synthetase subunit 1 (3584 aa).

The disordered stretch occupies residues 25–44; that stretch reads IESINGDKNKSERHTASSSA. Over residues 29 to 39 the composition is skewed to basic and acidic residues; that stretch reads NGDKNKSERHT. The interval 307-706 is adenylation (A) domain 1; the sequence is SCCSRPNSQA…LGRKDDQVKI (400 aa). The region spanning 848-917 is the Carrier 1 domain; it reads REKLLQALFA…TLREIVIVST (70 aa). S880 bears the O-(pantetheine 4'-phosphoryl)serine mark. The condensation (C) domain 1 stretch occupies residues 962-1353; the sequence is EDIYPCTHLQ…EHILTQIHSN (392 aa). Residues 1396 to 1803 form an adenylation (A) domain 2 region; the sequence is QAKCQAQPDA…RRKDAQVKIR (408 aa). The 69-residue stretch at 1948-2016 folds into the Carrier 2 domain; it reads TEHEISAIWA…TIRKLALARG (69 aa). S1980 carries the O-(pantetheine 4'-phosphoryl)serine modification. Positions 2066–2483 are condensation (C) domain 2; that stretch reads ERIYPCSPIQ…ALPVLDEDQM (418 aa). Positions 2508–2906 are adenylation (A) domain 3; the sequence is QCIRCPDSPS…GRNDDQVKVR (399 aa). The region spanning 3041-3109 is the Carrier 3 domain; sequence MEAELQQLVG…RLSDLARIVE (69 aa). Position 3073 is an O-(pantetheine 4'-phosphoryl)serine (S3073). Residues 3174–3472 form a cyclization (Cyc) domain region; sequence LYFSKPMASE…VAKSTTWSSD (299 aa).

Belongs to the NRP synthetase family.

It functions in the pathway alkaloid biosynthesis; ergot alkaloid biosynthesis. Its function is as follows. D-lysergyl-peptide-synthetase subunit 1; part of the gene cluster that mediates the biosynthesis of fungal ergot alkaloid. DmaW catalyzes the first step of ergot alkaloid biosynthesis by condensing dimethylallyl diphosphate (DMAP) and tryptophan to form 4-dimethylallyl-L-tryptophan. The second step is catalyzed by the methyltransferase easF that methylates 4-dimethylallyl-L-tryptophan in the presence of S-adenosyl-L-methionine, resulting in the formation of 4-dimethylallyl-L-abrine. The catalase easC and the FAD-dependent oxidoreductase easE then transform 4-dimethylallyl-L-abrine to chanoclavine-I which is further oxidized by easD in the presence of NAD(+), resulting in the formation of chanoclavine-I aldehyde. Agroclavine dehydrogenase easG then mediates the conversion of chanoclavine-I aldehyde to agroclavine via a non-enzymatic adduct reaction: the substrate is an iminium intermediate that is formed spontaneously from chanoclavine-I aldehyde in the presence of glutathione. The presence of easA is not required to complete this reaction. Further conversion of agroclavine to paspalic acid is a two-step process involving oxidation of agroclavine to elymoclavine and of elymoclavine to paspalic acid, the second step being performed by the elymoclavine oxidase cloA. Paspalic acid is then further converted to D-lysergic acid. Ergopeptines are assembled from D-lysergic acid and three different amino acids by the D-lysergyl-peptide-synthetases composed each of a monomudular and a trimodular nonribosomal peptide synthetase subunit. LpsB and lpsC encode the monomodular subunits responsible for D-lysergic acid activation and incorporation into the ergopeptine backbone. LpsA1 and A2 subunits encode the trimodular nonribosomal peptide synthetase assembling the tripeptide portion of ergopeptines. LpsA1 is responsible for formation of the major ergopeptine, ergotamine, and lpsA2 for alpha-ergocryptine, the minor ergopeptine of the total alkaloid mixture elaborated by C.purpurea. D-lysergyl-tripeptides are assembled by the nonribosomal peptide synthetases and released as N-(D-lysergyl-aminoacyl)-lactams. Cyclolization of the D-lysergyl-tripeptides is performed by the Fe(2+)/2-ketoglutarate-dependent dioxygenase easH which introduces a hydroxyl group into N-(D-lysergyl-aminoacyl)-lactam at alpha-C of the aminoacyl residue followed by spontaneous condensation with the terminal lactam carbonyl group. The polypeptide is D-lysergyl-peptide-synthetase subunit 1 (Claviceps purpurea (strain 20.1) (Ergot fungus)).